Reading from the N-terminus, the 47-residue chain is Cytochrome b559 subunit beta (47 aa).

Residues 22 to 38 traverse the membrane as a helical segment; sequence WLAVHTLAIPTVFFLGA. Histidine 26 contributes to the heme binding site.

This sequence belongs to the PsbE/PsbF family. Heterodimer of an alpha subunit and a beta subunit. PSII is composed of 1 copy each of membrane proteins PsbA, PsbB, PsbC, PsbD, PsbE, PsbF, PsbH, PsbI, PsbJ, PsbK, PsbL, PsbM, PsbT, PsbX, PsbY, PsbZ, Psb30/Ycf12, peripheral proteins PsbO, CyanoQ (PsbQ), PsbU, PsbV and a large number of cofactors. It forms dimeric complexes. The cofactor is heme b.

It localises to the cellular thylakoid membrane. Its function is as follows. This b-type cytochrome is tightly associated with the reaction center of photosystem II (PSII). PSII is a light-driven water:plastoquinone oxidoreductase that uses light energy to abstract electrons from H(2)O, generating O(2) and a proton gradient subsequently used for ATP formation. It consists of a core antenna complex that captures photons, and an electron transfer chain that converts photonic excitation into a charge separation. In Synechococcus sp. (strain JA-3-3Ab) (Cyanobacteria bacterium Yellowstone A-Prime), this protein is Cytochrome b559 subunit beta.